Reading from the N-terminus, the 161-residue chain is Phosphopantetheine adenylyltransferase (161 aa).

T9 contacts substrate. ATP-binding positions include 9–10 (TF) and H17. Substrate is bound by residues K41, L73, and R87. ATP is bound by residues 88–90 (GMR), E98, and 123–129 (WSYVSST).

The protein belongs to the bacterial CoaD family. As to quaternary structure, homohexamer. The cofactor is Mg(2+).

It localises to the cytoplasm. The catalysed reaction is (R)-4'-phosphopantetheine + ATP + H(+) = 3'-dephospho-CoA + diphosphate. Its pathway is cofactor biosynthesis; coenzyme A biosynthesis; CoA from (R)-pantothenate: step 4/5. In terms of biological role, reversibly transfers an adenylyl group from ATP to 4'-phosphopantetheine, yielding dephospho-CoA (dPCoA) and pyrophosphate. In Actinobacillus succinogenes (strain ATCC 55618 / DSM 22257 / CCUG 43843 / 130Z), this protein is Phosphopantetheine adenylyltransferase.